A 129-amino-acid chain; its full sequence is MAELIQKKLQGEVEKYQQLQKDLSKSMSGRQKLEAQLTENNIVKEELALLDGSNVVFKLLGPVLVKQELGEARATVGKRLDYITAEIKRYESQLRDLERQSEQQRETLAQLQQEFQRAQAAKAGASGKA.

Position 2 is an N-acetylalanine (Ala-2). Residue Lys-21 is modified to N6-acetyllysine. Lys-66 is subject to N6-acetyllysine; alternate. Lys-66 participates in a covalent cross-link: Glycyl lysine isopeptide (Lys-Gly) (interchain with G-Cter in SUMO1); alternate. Lys-66 is covalently cross-linked (Glycyl lysine isopeptide (Lys-Gly) (interchain with G-Cter in SUMO2); alternate).

The protein belongs to the prefoldin subunit beta family. Heterohexamer of two PFD-alpha type and four PFD-beta type subunits. Component of the PAQosome complex which is responsible for the biogenesis of several protein complexes and which consists of R2TP complex members RUVBL1, RUVBL2, RPAP3 and PIH1D1, URI complex members PFDN2, PFDN6, PDRG1, UXT and URI1 as well as ASDURF, POLR2E and DNAAF10/WDR92.

Functionally, binds specifically to cytosolic chaperonin (c-CPN) and transfers target proteins to it. Binds to nascent polypeptide chain and promotes folding in an environment in which there are many competing pathways for nonnative proteins. The polypeptide is Prefoldin subunit 6 (PFDN6) (Canis lupus familiaris (Dog)).